The sequence spans 138 residues: Putative pre-16S rRNA nuclease (138 aa).

It belongs to the YqgF nuclease family.

The protein resides in the cytoplasm. Its function is as follows. Could be a nuclease involved in processing of the 5'-end of pre-16S rRNA. The sequence is that of Putative pre-16S rRNA nuclease from Fusobacterium nucleatum subsp. nucleatum (strain ATCC 25586 / DSM 15643 / BCRC 10681 / CIP 101130 / JCM 8532 / KCTC 2640 / LMG 13131 / VPI 4355).